We begin with the raw amino-acid sequence, 65 residues long: Photosystem II reaction center protein J (65 aa).

Residues 35–55 (LWLVATAGGTAVIFVLGIFFY) traverse the membrane as a helical segment.

The protein belongs to the PsbJ family. As to quaternary structure, PSII is composed of 1 copy each of membrane proteins PsbA, PsbB, PsbC, PsbD, PsbE, PsbF, PsbH, PsbI, PsbJ, PsbK, PsbL, PsbM, PsbT, PsbX, PsbY, Psb30/Ycf12, peripheral proteins PsbO, CyanoQ (PsbQ), PsbU, PsbV and a large number of cofactors. It forms dimeric complexes.

It is found in the cellular thylakoid membrane. One of the components of the core complex of photosystem II (PSII). PSII is a light-driven water:plastoquinone oxidoreductase that uses light energy to abstract electrons from H(2)O, generating O(2) and a proton gradient subsequently used for ATP formation. It consists of a core antenna complex that captures photons, and an electron transfer chain that converts photonic excitation into a charge separation. The protein is Photosystem II reaction center protein J of Prochlorococcus marinus (strain NATL2A).